Consider the following 160-residue polypeptide: Type-1 angiotensin II receptor-associated protein (160 aa).

Over 1-9 (MELPAVNLK) the chain is Extracellular. Residues 10–30 (VILLVHWLLTTWGCLAFSGSY) form a helical membrane-spanning segment. The Cytoplasmic segment spans residues 31 to 53 (AWGNFTILALGVWAVAQRDSVDA). The helical transmembrane segment at 54–74 (IGMFLGGLVATIFLDIIYISI) threads the bilayer. Residues 75–86 (FYSSVAVGDTGR) are Extracellular-facing. A helical membrane pass occupies residues 87-107 (FSAGMAIFSLLLKPFSCCLVY). The Cytoplasmic segment spans residues 108–160 (HMHRERGGELPLRSDFFGPSQEHSAYQTIDSSDSPADPLASLENKGQAAPRGY). An interaction with AGTR1 region spans residues 110 to 122 (HRERGGELPLRSD). Phosphoserine is present on Ser127. A disordered region spans residues 128–160 (QEHSAYQTIDSSDSPADPLASLENKGQAAPRGY). The residue at position 135 (Thr135) is a Phosphothreonine. The segment covering 137–149 (DSSDSPADPLASL) has biased composition (low complexity). Ser138 carries the phosphoserine modification.

Interacts with RACK1, and with the carboxy-terminal region of AGTR1.

It is found in the endoplasmic reticulum membrane. The protein localises to the golgi apparatus membrane. Its subcellular location is the cytoplasmic vesicle membrane. Appears to be a negative regulator of type-1 angiotensin II receptor-mediated signaling by regulating receptor internalization as well as mechanism of receptor desensitization such as phosphorylation. May play a role of negative regulator in cardiomyocyte hypertrophy induced by angiotensin II through an inhibition of p38 mitogen-activated protein kinase pathway. Attenuates type-1 angiotensin II receptor growth promoting effect and angiotensin II-induced phosphorylation of protein kinase AKT and of STAT3. The polypeptide is Type-1 angiotensin II receptor-associated protein (Agtrap) (Rattus norvegicus (Rat)).